Consider the following 311-residue polypeptide: uncharacterized protein (311 aa).

This is an uncharacterized protein from Sinorhizobium fredii (strain NBRC 101917 / NGR234).